We begin with the raw amino-acid sequence, 55 residues long: Protein CADMIUM TOLERANCE 1 (55 aa).

Residues 24–40 (GCLYACIFTALCCFCCY) traverse the membrane as a helical segment.

This sequence belongs to the CYSTM1 family. As to expression, expressed in roots and shoots.

Its subcellular location is the cell membrane. It is found in the secreted. The protein localises to the cell wall. Its function is as follows. Confers resistance to heavy metal ions (e.g. cadmium (CdCl(2)) and copper (CuCl(2))) by chelating them at the plasma membrane of root cells, thus stopping their entry and reducing their accumulation. Binds to aluminium (Al). This chain is Protein CADMIUM TOLERANCE 1, found in Oryza sativa subsp. japonica (Rice).